Consider the following 373-residue polypeptide: UDP-N-acetylenolpyruvoylglucosamine reductase (373 aa).

The FAD-binding PCMH-type domain occupies 30–203; that stretch reads LACMADSVVT…SRVGFRLHTD (174 aa). The active site involves R180. S258 acts as the Proton donor in catalysis. E356 is a catalytic residue.

This sequence belongs to the MurB family. Requires FAD as cofactor.

The protein localises to the cytoplasm. The enzyme catalyses UDP-N-acetyl-alpha-D-muramate + NADP(+) = UDP-N-acetyl-3-O-(1-carboxyvinyl)-alpha-D-glucosamine + NADPH + H(+). Its pathway is cell wall biogenesis; peptidoglycan biosynthesis. Cell wall formation. The protein is UDP-N-acetylenolpyruvoylglucosamine reductase of Psychrobacter cryohalolentis (strain ATCC BAA-1226 / DSM 17306 / VKM B-2378 / K5).